Consider the following 411-residue polypeptide: Arginine deiminase (411 aa).

C401 acts as the Amidino-cysteine intermediate in catalysis.

This sequence belongs to the arginine deiminase family.

It is found in the cytoplasm. The enzyme catalyses L-arginine + H2O = L-citrulline + NH4(+). Its pathway is amino-acid degradation; L-arginine degradation via ADI pathway; carbamoyl phosphate from L-arginine: step 1/2. This Streptococcus equi subsp. zooepidemicus (strain MGCS10565) protein is Arginine deiminase.